The following is a 273-amino-acid chain: Chondrolectin (273 aa).

Residues 1-21 (MSRVVSLLLGAALLCGHGAFC) form the signal peptide. Over 22 to 216 (RRVVSGQKVC…VVTEAGIIPN (195 aa)) the chain is Extracellular. Residues 35–179 (FKHPCYKMAY…CNMKHNYICK (145 aa)) form the C-type lectin domain. Intrachain disulfides connect Cys-61–Cys-178 and Cys-144–Cys-170. Asn-86 carries an N-linked (GlcNAc...) asparagine glycan. Residues 217–237 (LIYVVIPTIPLLLLILVAFGT) form a helical membrane-spanning segment. Topologically, residues 238–273 (CCFQMLHKSKGRTKTSPNQSTLWISKSTRKESGMEV) are cytoplasmic. Positions 248–273 (GRTKTSPNQSTLWISKSTRKESGMEV) are disordered. Positions 251-263 (KTSPNQSTLWISK) are enriched in polar residues.

As to quaternary structure, interacts with RABGGTB. N-glycosylated. As to expression, found in spleen, testis, prostate and fetal liver. Expression limited to vascular muscle of testis, smooth muscle of prostate stroma, heart muscle, skeletal muscle, crypts of small intestine, and red pulp of spleen. B lymphocytes express isoform 2 only; peripheral blood T lymphocytes express isoform 3 only; granulocytes and monocytes express neither isoform 2 nor isoform 3. During development of T lymphocytes, bone marrow progenitor cells express isoform 2 only; thymocytes at different stages of maturation express predominantly isoform 2 and weakly isoform 3, and mature thymocytes express only isoform 2.

The protein resides in the cytoplasm. The protein localises to the membrane. It localises to the endoplasmic reticulum. It is found in the endoplasmic reticulum membrane. May play a role in the development of the nervous system such as in neurite outgrowth and elongation. May be involved in motor axon growth and guidance. The sequence is that of Chondrolectin (CHODL) from Homo sapiens (Human).